The following is a 148-amino-acid chain: 3-hydroxyacyl-[acyl-carrier-protein] dehydratase FabZ (148 aa).

The active site involves His50.

It belongs to the thioester dehydratase family. FabZ subfamily.

The protein localises to the cytoplasm. It catalyses the reaction a (3R)-hydroxyacyl-[ACP] = a (2E)-enoyl-[ACP] + H2O. Functionally, involved in unsaturated fatty acids biosynthesis. Catalyzes the dehydration of short chain beta-hydroxyacyl-ACPs and long chain saturated and unsaturated beta-hydroxyacyl-ACPs. In Levilactobacillus brevis (strain ATCC 367 / BCRC 12310 / CIP 105137 / JCM 1170 / LMG 11437 / NCIMB 947 / NCTC 947) (Lactobacillus brevis), this protein is 3-hydroxyacyl-[acyl-carrier-protein] dehydratase FabZ.